The primary structure comprises 128 residues: ATP synthase epsilon chain (128 aa).

This sequence belongs to the ATPase epsilon chain family. F-type ATPases have 2 components, CF(1) - the catalytic core - and CF(0) - the membrane proton channel. CF(1) has five subunits: alpha(3), beta(3), gamma(1), delta(1), epsilon(1). CF(0) has three main subunits: a, b and c.

It localises to the cell inner membrane. Its function is as follows. Produces ATP from ADP in the presence of a proton gradient across the membrane. This chain is ATP synthase epsilon chain, found in Sulfurovum sp. (strain NBC37-1).